We begin with the raw amino-acid sequence, 724 residues long: Eukaryotic elongation factor 2 kinase (724 aa).

Alanine 2 is subject to N-acetylalanine. A disordered region spans residues 11–35 (EGVDGGGSSGAGRHGDSDTDSDDDE). The span at 13–22 (VDGGGSSGAG) shows a compositional bias: gly residues. A phosphoserine mark is found at serine 18, serine 27, serine 70, and serine 73. The residue at position 77 (serine 77) is a Phosphoserine; by autocatalysis and TRPM7. Residues 80–93 (FKEAWKHAIEKAKH) form a calmodulin-binding region. The 211-residue stretch at 115-325 (RYNAVTGEWL…ICQSMGLAPF (211 aa)) folds into the Alpha-type protein kinase domain. The residue at position 242 (serine 242) is a Phosphoserine. Position 295 to 301 (295 to 301 (GDGNLGV)) interacts with ATP. Position 347 is a phosphothreonine (threonine 347). Threonine 352 carries the post-translational modification Phosphothreonine; by autocatalysis. The segment at 353–476 (EEKCGSPRIR…PESDEDSLGS (124 aa)) is disordered. Position 358 is a phosphoserine; by MAPK13 and CDK1 (serine 358). The segment covering 364–376 (LSGSRPPLLLRLS) has biased composition (low complexity). Residues serine 365 and serine 391 each carry the phosphoserine modification. The span at 385-403 (SDVTFDSLPSSPSSATPHS) shows a compositional bias: polar residues. Serine 397 carries the phosphoserine; by AMPK modification. Basic and acidic residues-rich tracts occupy residues 421-435 (GPRD…RDSE) and 444-468 (SEKR…RRPE). Serine 434, serine 444, serine 469, serine 473, and serine 476 each carry phosphoserine. Serine 499 bears the Phosphoserine; by PKA mark.

The protein belongs to the protein kinase superfamily. Alpha-type protein kinase family. Monomer or homodimer. Interacts with Calmodulin/CALM1; this interaction is strictly required for phosphorylation activity. Post-translationally, the N-terminus is blocked. Autophosphorylated at multiple residues, Thr-347 being the major site. Phosphorylated by AMP-activated protein kinase AMPK at Ser-397 leading to EEF2K activation and protein synthesis inhibition. Phosphorylated by TRPM7 at Ser-77 resulting in improved protein stability, higher EE2F phosphorylated and subsequently reduced rate of protein synthesis. Phosphorylation by other kinases such as CDK1 and MAPK13 at Ser-358 or RPS6KA1 and RPS6KB1 at Ser-365 instead decrease EEF2K activity and promote protein synthesis. As to expression, widely expressed, with high levels in reticulocytes and skeletal muscle.

It carries out the reaction [translation elongation factor 2] + ATP = [translation elongation factor 2]-phosphate + ADP + H(+). Its activity is regulated as follows. Undergoes calcium/calmodulin-dependent intramolecular autophosphorylation, and this results in it becoming partially calcium/calmodulin-independent. Threonine kinase that regulates protein synthesis by controlling the rate of peptide chain elongation. Upon activation by a variety of upstream kinases including AMPK or TRPM7, phosphorylates the elongation factor EEF2 at a single site, renders it unable to bind ribosomes and thus inactive. In turn, the rate of protein synthesis is reduced. This is Eukaryotic elongation factor 2 kinase from Rattus norvegicus (Rat).